The sequence spans 616 residues: Chaperone protein DnaK (616 aa).

Thr-175 is modified (phosphothreonine; by autocatalysis). The segment at 579 to 616 is disordered; that stretch reads GGDPSQAGGFDPNAAGGAQQEPHDDNVVDADFKVDDDK. The span at 599–616 shows a compositional bias: basic and acidic residues; it reads EPHDDNVVDADFKVDDDK.

The protein belongs to the heat shock protein 70 family.

Functionally, acts as a chaperone. This is Chaperone protein DnaK from Clostridium botulinum (strain Eklund 17B / Type B).